A 116-amino-acid polypeptide reads, in one-letter code: UPF0134 protein MPN_038 (116 aa).

Belongs to the UPF0134 family.

The sequence is that of UPF0134 protein MPN_038 from Mycoplasma pneumoniae (strain ATCC 29342 / M129 / Subtype 1) (Mycoplasmoides pneumoniae).